Reading from the N-terminus, the 1913-residue chain is Protein TIC 214 (1913 aa).

5 consecutive transmembrane segments (helical) span residues 18-38 (IINS…FSIG), 64-84 (FITG…HLAL), 124-144 (LSIQ…HLML), 172-192 (VGWL…VSWI), and 214-234 (LKSA…VNYL). 3 disordered regions span residues 245 to 330 (KLNE…ETEE), 707 to 734 (YTDK…NSDT), and 1605 to 1652 (EKED…RKKK). A compositionally biased stretch (basic and acidic residues) spans 260–289 (KESQKSKESEEERDVEKETTSETKETKQEQ). Positions 303 to 314 (EKEDPDKIDETE) are enriched in acidic residues. A compositionally biased stretch (basic and acidic residues) spans 315-330 (EIRVNGKEKKKDETEE). Positions 718 to 729 (PNPNTDNTTTEN) are enriched in low complexity.

It belongs to the TIC214 family. In terms of assembly, part of the Tic complex.

Its subcellular location is the plastid. It is found in the chloroplast inner membrane. Functionally, involved in protein precursor import into chloroplasts. May be part of an intermediate translocation complex acting as a protein-conducting channel at the inner envelope. The protein is Protein TIC 214 of Acorus calamus var. americanus (American sweet flag).